We begin with the raw amino-acid sequence, 156 residues long: ATP synthase subunit b (156 aa).

The chain crosses the membrane as a helical span at residues 3 to 23; the sequence is ITLTIFAQALAFAGLIWIVAT.

It belongs to the ATPase B chain family. F-type ATPases have 2 components, F(1) - the catalytic core - and F(0) - the membrane proton channel. F(1) has five subunits: alpha(3), beta(3), gamma(1), delta(1), epsilon(1). F(0) has three main subunits: a(1), b(2) and c(10-14). The alpha and beta chains form an alternating ring which encloses part of the gamma chain. F(1) is attached to F(0) by a central stalk formed by the gamma and epsilon chains, while a peripheral stalk is formed by the delta and b chains.

The protein localises to the cell inner membrane. Functionally, f(1)F(0) ATP synthase produces ATP from ADP in the presence of a proton or sodium gradient. F-type ATPases consist of two structural domains, F(1) containing the extramembraneous catalytic core and F(0) containing the membrane proton channel, linked together by a central stalk and a peripheral stalk. During catalysis, ATP synthesis in the catalytic domain of F(1) is coupled via a rotary mechanism of the central stalk subunits to proton translocation. Its function is as follows. Component of the F(0) channel, it forms part of the peripheral stalk, linking F(1) to F(0). This Xanthomonas oryzae pv. oryzae (strain MAFF 311018) protein is ATP synthase subunit b.